Here is a 209-residue protein sequence, read N- to C-terminus: Eukaryotic translation initiation factor isoform 4E-2 (209 aa).

Residues 1–29 (MAEVEAALPVAATETPEVAAEGDAGAAEA) are disordered. Positions 9–29 (PVAATETPEVAAEGDAGAAEA) are enriched in low complexity. MRNA-binding positions include 51-56 (PGAAWG), lysine 83, and 101-102 (WE). Cysteine 106 and cysteine 145 are disulfide-bonded. Residues 152-157 (RQRQDK) and 197-200 (RSQK) each bind mRNA.

It belongs to the eukaryotic initiation factor 4E family. In terms of assembly, EIF4F is a multi-subunit complex, the composition of which varies with external and internal environmental conditions. It is composed of at least EIF4A, EIF4E and EIF4G. EIF4E is also known to interact with other partners. In higher plants two isoforms of EIF4F have been identified, named isoform EIF4F and isoform EIF(iso)4F. Isoform EIF4F has subunits p220 and p26, whereas isoform EIF(iso)4F has subunits p82 and p28. Post-translationally, according to the redox status, the Cys-106-Cys-145 disulfide bridge may have a role in regulating protein function by affecting its ability to bind capped mRNA.

The protein resides in the cytoplasm. The protein localises to the nucleus. Its function is as follows. Component of the protein complex eIF4F, which is involved in the recognition of the mRNA cap, ATP-dependent unwinding of 5'-terminal secondary structure and recruitment of mRNA to the ribosome. Recognizes and binds the 7-methylguanosine-containing mRNA cap during an early step in the initiation of protein synthesis and facilitates ribosome binding by inducing the unwinding of the mRNAs secondary structures. This is Eukaryotic translation initiation factor isoform 4E-2 from Triticum aestivum (Wheat).